A 350-amino-acid polypeptide reads, in one-letter code: Histidinol-phosphate aminotransferase 1 (350 aa).

Lys211 is subject to N6-(pyridoxal phosphate)lysine.

It belongs to the class-II pyridoxal-phosphate-dependent aminotransferase family. Histidinol-phosphate aminotransferase subfamily. In terms of assembly, homodimer. The cofactor is pyridoxal 5'-phosphate.

The enzyme catalyses L-histidinol phosphate + 2-oxoglutarate = 3-(imidazol-4-yl)-2-oxopropyl phosphate + L-glutamate. It functions in the pathway amino-acid biosynthesis; L-histidine biosynthesis; L-histidine from 5-phospho-alpha-D-ribose 1-diphosphate: step 7/9. This is Histidinol-phosphate aminotransferase 1 from Trichormus variabilis (strain ATCC 29413 / PCC 7937) (Anabaena variabilis).